The chain runs to 309 residues: THAP domain-containing protein 7 (309 aa).

A THAP-type zinc finger spans residues 1–93 (MPRHCSAAGC…LKEGAVPTIF (93 aa)). The interval 158–209 (TLPASPAGRLEPGLSSPFSDLLGPLGAQADEAGCSAQPSPERQPSPLEPRPV) is disordered. S162 is modified (phosphoserine). The span at 198–209 (ERQPSPLEPRPV) shows a compositional bias: pro residues. Position 210 is a phosphoserine (S210). Residues 229–232 (EHSY) carry the HCFC1-binding motif (HBM) motif.

Forms homodimers. Interacts with HDAC3 and nuclear hormone receptor corepressors. Interacts via HBM with HCFC1.

The protein resides in the nucleus. The protein localises to the chromosome. In terms of biological role, chromatin-associated, histone tail-binding protein that represses transcription via recruitment of HDAC3 and nuclear hormone receptor corepressors. In Homo sapiens (Human), this protein is THAP domain-containing protein 7 (THAP7).